A 59-amino-acid polypeptide reads, in one-letter code: Chromatin protein Cren7 (59 aa).

It belongs to the Cren7 family. As to quaternary structure, monomer. Methylated at multiple sites, to varying extents.

It localises to the chromosome. It is found in the cytoplasm. Functionally, a chromatin protein, binds double-stranded DNA without sequence specificity. Constrains negative DNA supercoils. In Pyrobaculum aerophilum (strain ATCC 51768 / DSM 7523 / JCM 9630 / CIP 104966 / NBRC 100827 / IM2), this protein is Chromatin protein Cren7.